Reading from the N-terminus, the 225-residue chain is Ribonuclease 3 (225 aa).

The RNase III domain maps to 7 to 129 (LPRLGRILGY…IIGAIYLDAD (123 aa)). Residue Glu42 participates in Mg(2+) binding. Asp46 is an active-site residue. Mg(2+) is bound by residues Asp115 and Glu118. The active site involves Glu118. The DRBM domain maps to 155–225 (DPKTLLQEHL…AAEVLERIKK (71 aa)).

The protein belongs to the ribonuclease III family. In terms of assembly, homodimer. Mg(2+) is required as a cofactor.

It is found in the cytoplasm. The enzyme catalyses Endonucleolytic cleavage to 5'-phosphomonoester.. Functionally, digests double-stranded RNA. Involved in the processing of primary rRNA transcript to yield the immediate precursors to the large and small rRNAs (23S and 16S). Processes some mRNAs, and tRNAs when they are encoded in the rRNA operon. Processes pre-crRNA and tracrRNA of type II CRISPR loci if present in the organism. The sequence is that of Ribonuclease 3 from Shewanella loihica (strain ATCC BAA-1088 / PV-4).